We begin with the raw amino-acid sequence, 94 residues long: Putative pterin-4-alpha-carbinolamine dehydratase (94 aa).

Belongs to the pterin-4-alpha-carbinolamine dehydratase family.

It carries out the reaction (4aS,6R)-4a-hydroxy-L-erythro-5,6,7,8-tetrahydrobiopterin = (6R)-L-erythro-6,7-dihydrobiopterin + H2O. The chain is Putative pterin-4-alpha-carbinolamine dehydratase from Mycobacterium tuberculosis (strain ATCC 25177 / H37Ra).